Consider the following 341-residue polypeptide: Phosphoribosylformylglycinamidine cyclo-ligase (341 aa).

It belongs to the AIR synthase family.

It localises to the cytoplasm. It carries out the reaction 2-formamido-N(1)-(5-O-phospho-beta-D-ribosyl)acetamidine + ATP = 5-amino-1-(5-phospho-beta-D-ribosyl)imidazole + ADP + phosphate + H(+). The protein operates within purine metabolism; IMP biosynthesis via de novo pathway; 5-amino-1-(5-phospho-D-ribosyl)imidazole from N(2)-formyl-N(1)-(5-phospho-D-ribosyl)glycinamide: step 2/2. This Lachnospira eligens (strain ATCC 27750 / DSM 3376 / VPI C15-48 / C15-B4) (Eubacterium eligens) protein is Phosphoribosylformylglycinamidine cyclo-ligase.